We begin with the raw amino-acid sequence, 498 residues long: U4/U6 small nuclear ribonucleoprotein Prp31 (498 aa).

2 coiled-coil regions span residues 84–119 and 180–214; these read EAAP…KYSK and DEEL…MSFI. The Nop domain maps to 214–332; sequence IAPNLSIIVG…IERKFDKWQE (119 aa). Residues 333–356 are disordered; sequence PPPVKQVKPLPAPLDGQRKKRGGR. Positions 350–363 match the Nuclear localization signal (NLS) motif; sequence RKKRGGRRYRKMKE.

This sequence belongs to the PRP31 family. As to quaternary structure, identified in the spliceosome B complex. Component of the U4/U6-U5 tri-snRNP complex. Component of some MLL1/MLL complex.

The protein localises to the nucleus. Its subcellular location is the nucleus speckle. It is found in the cajal body. Its function is as follows. Involved in pre-mRNA splicing as component of the spliceosome. Required for the assembly of the U4/U5/U6 tri-snRNP complex, one of the building blocks of the spliceosome. This chain is U4/U6 small nuclear ribonucleoprotein Prp31 (prpf31), found in Xenopus tropicalis (Western clawed frog).